A 198-amino-acid polypeptide reads, in one-letter code: Peroxiredoxin-2 (198 aa).

A2 carries the N-acetylalanine modification. Residues 6–164 (AQIGKSAPDF…ALRLVQAFQY (159 aa)) enclose the Thioredoxin domain. A Phosphoserine modification is found at S11. C51 serves as the catalytic Cysteine sulfenic acid (-SOH) intermediate. Position 112 is a phosphoserine (S112). T182 is subject to Phosphothreonine. Residue K196 is modified to N6-acetyllysine.

Belongs to the peroxiredoxin family. AhpC/Prx1 subfamily. As to quaternary structure, homodimer; disulfide-linked, upon oxidation. 5 homodimers assemble to form a ring-like decamer. Interacts with TIPIN. In terms of processing, the enzyme can be inactivated by further oxidation of the cysteine sulfenic acid (C(P)-SOH) to sulphinic acid (C(P)-SO2H) instead of its condensation to a disulfide bond. It can be reactivated by forming a transient disulfide bond with sulfiredoxin SRXN1, which reduces the cysteine sulfinic acid in an ATP- and Mg-dependent manner. Acetylation increases resistance to transition to high molecular-mass complexes. Deacetylated by HDAC6 which decreases reducing activity. In terms of tissue distribution, widely expressed with highest levels in bone marrow. High levels also found in heart, brain, kidney and skeletal muscle. Lower levels in liver, lung and thymus.

The protein localises to the cytoplasm. It catalyses the reaction a hydroperoxide + [thioredoxin]-dithiol = an alcohol + [thioredoxin]-disulfide + H2O. Its function is as follows. Thiol-specific peroxidase that catalyzes the reduction of hydrogen peroxide and organic hydroperoxides to water and alcohols, respectively. Plays a role in cell protection against oxidative stress by detoxifying peroxides and as sensor of hydrogen peroxide-mediated signaling events. Might participate in the signaling cascades of growth factors and tumor necrosis factor-alpha by regulating the intracellular concentrations of H(2)O(2). This chain is Peroxiredoxin-2 (Prdx2), found in Mus musculus (Mouse).